Consider the following 350-residue polypeptide: Protein RecA (350 aa).

80–87 contacts ATP; that stretch reads GPESSGKT.

This sequence belongs to the RecA family.

The protein localises to the cytoplasm. Functionally, can catalyze the hydrolysis of ATP in the presence of single-stranded DNA, the ATP-dependent uptake of single-stranded DNA by duplex DNA, and the ATP-dependent hybridization of homologous single-stranded DNAs. It interacts with LexA causing its activation and leading to its autocatalytic cleavage. This is Protein RecA from Chlorobium limicola (strain DSM 245 / NBRC 103803 / 6330).